Here is a 339-residue protein sequence, read N- to C-terminus: Dihydroorotase (339 aa).

Zn(2+) is bound by residues histidine 12 and histidine 14. Substrate-binding positions include 14–16 (HVR) and asparagine 40. Zn(2+)-binding residues include lysine 94, histidine 133, histidine 167, and aspartate 239. Lysine 94 bears the N6-carboxylysine mark. Position 133 (histidine 133) interacts with substrate. Aspartate 239 is a catalytic residue. Histidine 243 and alanine 255 together coordinate substrate.

Belongs to the metallo-dependent hydrolases superfamily. DHOase family. Class II DHOase subfamily. Homodimer. Zn(2+) serves as cofactor.

It catalyses the reaction (S)-dihydroorotate + H2O = N-carbamoyl-L-aspartate + H(+). It participates in pyrimidine metabolism; UMP biosynthesis via de novo pathway; (S)-dihydroorotate from bicarbonate: step 3/3. Catalyzes the reversible cyclization of carbamoyl aspartate to dihydroorotate. The polypeptide is Dihydroorotase (Helicobacter pylori (strain J99 / ATCC 700824) (Campylobacter pylori J99)).